The sequence spans 287 residues: Toxin zeta (287 aa).

Residue 40–47 (GQPGSGKT) participates in ATP binding. A disordered region spans residues 250–287 (MVQNQHQETPEFKAIQQKMESLQPPTPPIPKTPKLPGI). Residues 273–287 (PPTPPIPKTPKLPGI) show a composition bias toward pro residues.

Belongs to the zeta toxin family. In the presence of the epsilon antitoxin, forms an inactive PezA(2)PezT(2) heterotetramer.

The catalysed reaction is UDP-N-acetyl-alpha-D-glucosamine + ATP = UDP-N-acetyl-alpha-D-glucosamine 3'-phosphate + ADP + H(+). Toxic component of a type II toxin-antitoxin (TA) system. Phosphorylates UDP-N-acetyl-D-glucosamine (UNAG) on the 3'-hydroxyl group of the N-acetyl-D-glucosamine moiety, yielding UNAG-3P. UNAG-3P inhibits MurA, the first committed step in cell wall synthesis, which is then blocked. Phosphorylation is inhibited by cognate epsilon antitoxin. Part of a postsegregational killing (PSK) system involved in the killing of plasmid-free cells. The zeta toxin induces programmed cell death. The protein is Toxin zeta of Streptococcus agalactiae.